We begin with the raw amino-acid sequence, 329 residues long: Protoheme IX farnesyltransferase (329 aa).

7 helical membrane passes run 61 to 81 (LACTLGGGALAAAAAGVLNCL), 108 to 128 (AFLIAVALACGASLLLVAGVN), 130 to 150 (LAAGLSLLGLCSYVLLYTIVL), 158 to 178 (IVIGGVAGAIPPLVGAAAATG), 186 to 206 (WLFGLVMLWTPAHFWALALLL), 243 to 263 (LLGVLTLPSGGLFYGLMVLPF), and 284 to 304 (AKGLFRWSILYLFGICLLLLL).

It belongs to the UbiA prenyltransferase family. Protoheme IX farnesyltransferase subfamily.

The protein localises to the cell inner membrane. The catalysed reaction is heme b + (2E,6E)-farnesyl diphosphate + H2O = Fe(II)-heme o + diphosphate. The protein operates within porphyrin-containing compound metabolism; heme O biosynthesis; heme O from protoheme: step 1/1. Converts heme B (protoheme IX) to heme O by substitution of the vinyl group on carbon 2 of heme B porphyrin ring with a hydroxyethyl farnesyl side group. This chain is Protoheme IX farnesyltransferase, found in Synechococcus sp. (strain RCC307).